The primary structure comprises 338 residues: Extracellular globin (338 aa).

An N-terminal signal peptide occupies residues 1–18 (MRSLLLLSIVFFVVTVSA). Asn-19 carries N-linked (GlcNAc...) asparagine glycosylation. Globin domains lie at 25 to 167 (CMKS…KHGR) and 174 to 316 (CMRS…RHGK). Heme b-binding residues include Gln-82 and His-114. N-linked (GlcNAc...) asparagine glycosylation is present at Asn-216. Residues Gln-231 and His-263 each coordinate heme b. Residues 313-338 (RHGKEHHEHKEEHKEEHKEEHKEEQH) are disordered.

It belongs to the globin family. As to quaternary structure, homooctamer.

The protein localises to the secreted. It is found in the extracellular space. Has an extremely high oxygen affinity. In a vacuum, it takes several minutes to release its oxygen compared to milliseconds for a normal globin. Could be used as an oxygen scavenger for sterol biosynthesis. The sequence is that of Extracellular globin from Ascaris suum (Pig roundworm).